A 159-amino-acid chain; its full sequence is Trafficking protein particle complex subunit 6A (159 aa).

Ser-33 is subject to Phosphoserine.

This sequence belongs to the TRAPP small subunits family. BET3 subfamily. In terms of assembly, part of the multisubunit transport protein particle (TRAPP) complex. Heterodimer with TRAPPC3. The heterodimer TRAPPC3-TRAPPC6A interacts with TRAPPC2L. Interacts with TRAPPC2L.

It is found in the golgi apparatus. It localises to the cis-Golgi network. The protein resides in the endoplasmic reticulum. Functionally, may play a role in vesicular transport during the biogenesis of melanosomes. In Homo sapiens (Human), this protein is Trafficking protein particle complex subunit 6A.